Here is a 158-residue protein sequence, read N- to C-terminus: NAD(P)H-quinone oxidoreductase subunit J, chloroplastic (158 aa).

Belongs to the complex I 30 kDa subunit family. In terms of assembly, NDH is composed of at least 16 different subunits, 5 of which are encoded in the nucleus.

Its subcellular location is the plastid. It localises to the chloroplast thylakoid membrane. It carries out the reaction a plastoquinone + NADH + (n+1) H(+)(in) = a plastoquinol + NAD(+) + n H(+)(out). The enzyme catalyses a plastoquinone + NADPH + (n+1) H(+)(in) = a plastoquinol + NADP(+) + n H(+)(out). NDH shuttles electrons from NAD(P)H:plastoquinone, via FMN and iron-sulfur (Fe-S) centers, to quinones in the photosynthetic chain and possibly in a chloroplast respiratory chain. The immediate electron acceptor for the enzyme in this species is believed to be plastoquinone. Couples the redox reaction to proton translocation, and thus conserves the redox energy in a proton gradient. The sequence is that of NAD(P)H-quinone oxidoreductase subunit J, chloroplastic from Nicotiana tabacum (Common tobacco).